The following is a 131-amino-acid chain: C-type natriuretic peptide 2 (131 aa).

The signal sequence occupies residues 1-22 (MLYPALLCAALLLIAPLGHTEG). A propeptide spanning residues 23 to 109 (RTLYPSPDAI…KRAVTDRSRR (87 aa)) is cleaved from the precursor. C115 and C131 form a disulfide bridge.

This sequence belongs to the natriuretic peptide family. As to expression, expressed in brain and to a low extent in atrium.

It is found in the secreted. In terms of biological role, exhibits natriuretic and vasodepressor activity. Has a cGMP-stimulating activity. This Oncorhynchus mykiss (Rainbow trout) protein is C-type natriuretic peptide 2.